Here is a 146-residue protein sequence, read N- to C-terminus: Hemoglobin subunit beta (146 aa).

Val1 is subject to N-acetylvaline. The Globin domain occupies 2 to 146; sequence HLTGEEKSAV…VANALAHKYH (145 aa). Thr12 carries the post-translational modification Phosphothreonine. Ser44 carries the phosphoserine modification. Lys59 is modified (N6-acetyllysine). A heme b-binding site is contributed by His63. Lys82 carries the N6-acetyllysine modification. Position 92 (His92) interacts with heme b. The residue at position 93 (Cys93) is an S-nitrosocysteine. Residue Lys144 is modified to N6-acetyllysine.

This sequence belongs to the globin family. In terms of assembly, heterotetramer of two alpha chains and two beta chains. In terms of tissue distribution, red blood cells.

In terms of biological role, involved in oxygen transport from the lung to the various peripheral tissues. The sequence is that of Hemoglobin subunit beta (HBB) from Mico argentatus (Silvery marmoset).